A 584-amino-acid polypeptide reads, in one-letter code: Potassium-transporting ATPase potassium-binding subunit (584 aa).

The next 10 helical transmembrane spans lie at 8 to 28 (FLVL…EFMF), 65 to 85 (SFAV…FILQ), 139 to 159 (VQNF…IYGF), 172 to 192 (VLLL…ALVL), 262 to 282 (FTDL…CFMF), 292 to 312 (GIAI…LGIW), 398 to 418 (GLYC…LMVG), 440 to 460 (ILIP…ITAG), 507 to 527 (MFVG…AFVA), and 544 to 564 (LFII…FLPA).

It belongs to the KdpA family. The system is composed of three essential subunits: KdpA, KdpB and KdpC.

The protein resides in the cell membrane. Functionally, part of the high-affinity ATP-driven potassium transport (or Kdp) system, which catalyzes the hydrolysis of ATP coupled with the electrogenic transport of potassium into the cytoplasm. This subunit binds the extracellular potassium ions and delivers the ions to the membrane domain of KdpB through an intramembrane tunnel. This Methanoregula boonei (strain DSM 21154 / JCM 14090 / 6A8) protein is Potassium-transporting ATPase potassium-binding subunit.